The primary structure comprises 141 residues: Large ribosomal subunit protein uL11 (141 aa).

Belongs to the universal ribosomal protein uL11 family. Part of the ribosomal stalk of the 50S ribosomal subunit. Interacts with L10 and the large rRNA to form the base of the stalk. L10 forms an elongated spine to which L12 dimers bind in a sequential fashion forming a multimeric L10(L12)X complex. One or more lysine residues are methylated.

Functionally, forms part of the ribosomal stalk which helps the ribosome interact with GTP-bound translation factors. In Prochlorococcus marinus (strain NATL1A), this protein is Large ribosomal subunit protein uL11.